Here is a 396-residue protein sequence, read N- to C-terminus: Phosphoglycerate kinase (396 aa).

Substrate is bound by residues 21 to 23, Arg36, 59 to 62, Arg114, and Arg147; these read DIN and HFGR. ATP contacts are provided by residues Lys197, Glu319, and 349-352; that span reads GGDT.

The protein belongs to the phosphoglycerate kinase family. As to quaternary structure, monomer.

It localises to the cytoplasm. It carries out the reaction (2R)-3-phosphoglycerate + ATP = (2R)-3-phospho-glyceroyl phosphate + ADP. It functions in the pathway carbohydrate degradation; glycolysis; pyruvate from D-glyceraldehyde 3-phosphate: step 2/5. In Jannaschia sp. (strain CCS1), this protein is Phosphoglycerate kinase.